A 555-amino-acid polypeptide reads, in one-letter code: Glutamine--tRNA ligase (555 aa).

The 'HIGH' region motif lies at 35–45; the sequence is PEPNGYLHIGH. Residues 36–38 and 42–48 each bind ATP; these read EPN and HIGHAKS. The L-glutamine site is built by Asp-68 and Tyr-213. ATP is bound by residues Thr-232 and 262–263; that span reads RL. The 'KMSKS' region motif lies at 269–273; it reads ITSKR.

It belongs to the class-I aminoacyl-tRNA synthetase family. As to quaternary structure, monomer.

It localises to the cytoplasm. The enzyme catalyses tRNA(Gln) + L-glutamine + ATP = L-glutaminyl-tRNA(Gln) + AMP + diphosphate. In Azotobacter vinelandii (strain DJ / ATCC BAA-1303), this protein is Glutamine--tRNA ligase.